The following is a 1598-amino-acid chain: Structural maintenance of chromosomes flexible hinge domain-containing protein GMI1 (1598 aa).

A disordered region spans residues 1191 to 1218; sequence VTSAPTSEREESGYSTPHSKTTPPPESG. 2 coiled-coil regions span residues 1258 to 1301 and 1565 to 1595; these read TEDL…ASLE and EEMM…FTAM.

In terms of tissue distribution, highly expressed in closed buds and open flowers. Expressed at low levels in roots, stems, cauline leaves and siliques. Expressed in the region of the shoot and floral meristems.

The protein resides in the nucleus. Functionally, contributes to DNA double-strand break (DSB) repair via somatic homologous recombination. Functions downstream of ATM. In Arabidopsis thaliana (Mouse-ear cress), this protein is Structural maintenance of chromosomes flexible hinge domain-containing protein GMI1.